The sequence spans 185 residues: Peptidyl-tRNA hydrolase (185 aa).

TRNA is bound at residue Y14. Residue H19 is the Proton acceptor of the active site. TRNA-binding residues include Y65, N67, and N113.

The protein belongs to the PTH family. In terms of assembly, monomer.

The protein localises to the cytoplasm. It carries out the reaction an N-acyl-L-alpha-aminoacyl-tRNA + H2O = an N-acyl-L-amino acid + a tRNA + H(+). Its function is as follows. Hydrolyzes ribosome-free peptidyl-tRNAs (with 1 or more amino acids incorporated), which drop off the ribosome during protein synthesis, or as a result of ribosome stalling. Functionally, catalyzes the release of premature peptidyl moieties from peptidyl-tRNA molecules trapped in stalled 50S ribosomal subunits, and thus maintains levels of free tRNAs and 50S ribosomes. The sequence is that of Peptidyl-tRNA hydrolase from Rickettsia rickettsii (strain Iowa).